The chain runs to 475 residues: E3 ubiquitin-protein ligase TRIM62 (475 aa).

Residues 11-54 (CSICLSIYQDPVSLGCEHYFCRRCITEHWVRQEAQGARDCPECR) form an RING-type zinc finger. The B box-type zinc finger occupies 88–128 (RAARPCQAHDKVKLFCLTDRALLCFFCDEPALHEQHQVTGI). C93, H96, C114, and H120 together coordinate Zn(2+). Residues 121-241 (EQHQVTGIDD…LQERLAETDR (121 aa)) adopt a coiled-coil conformation. One can recognise a B30.2/SPRY domain in the interval 277–475 (PLQYTIWKSL…QPLRINTVRI (199 aa)).

It belongs to the TRIM/RBCC family. Interacts with the ubiquitin-conjugating enzyme, UBE2D2. Post-translationally, polyubiquitinated, autoubiquitinated in the presence of UBE2D2.

The protein resides in the cytoplasm. It catalyses the reaction S-ubiquitinyl-[E2 ubiquitin-conjugating enzyme]-L-cysteine + [acceptor protein]-L-lysine = [E2 ubiquitin-conjugating enzyme]-L-cysteine + N(6)-ubiquitinyl-[acceptor protein]-L-lysine.. The protein operates within protein modification; protein ubiquitination. In terms of biological role, E3 ubiquitin ligase that plays a role in antifungal immunity by mediating 'Lys-27'-linked ubiquitination of CARD9 downstream of C-type lectin receptors; leading to CARD9 activation, followed by activation of NF-kappa-B and MAP kinase p38 pathways. E3 ubiquitin ligase activity is dependent on E2 ubiquitin-conjugating enzyme UBE2D2. In Mus musculus (Mouse), this protein is E3 ubiquitin-protein ligase TRIM62.